Reading from the N-terminus, the 222-residue chain is Probable GTP-binding protein EngB (222 aa).

Residues 27-202 enclose the EngB-type G domain; the sequence is TGIEVAFAGR…AKKLDEWFLG (176 aa). GTP is bound by residues 35 to 42, 61 to 65, 81 to 84, 148 to 151, and 181 to 183; these read GRSNAGKS, GRTQL, DLPG, TKAD, and FSS. Mg(2+) is bound by residues Ser42 and Thr63.

It belongs to the TRAFAC class TrmE-Era-EngA-EngB-Septin-like GTPase superfamily. EngB GTPase family. Mg(2+) serves as cofactor.

Necessary for normal cell division and for the maintenance of normal septation. This chain is Probable GTP-binding protein EngB, found in Pseudoalteromonas translucida (strain TAC 125).